The following is a 589-amino-acid chain: Probable translation initiation factor IF-2 (589 aa).

The 215-residue stretch at 5 to 219 folds into the tr-type G domain; sequence IRTPIVCVLG…IMIGLAQRYL (215 aa). The segment at 14–21 is G1; sequence GHVDHGKT. 14–21 serves as a coordination point for GTP; it reads GHVDHGKT. The interval 39–43 is G2; it reads AITQH. The tract at residues 75 to 78 is G3; that stretch reads DTPG. Residues 75-79 and 129-132 each bind GTP; these read DTPGH and TKLD. The segment at 129–132 is G4; sequence TKLD. Residues 197–199 form a G5 region; sequence SSM.

Belongs to the TRAFAC class translation factor GTPase superfamily. Classic translation factor GTPase family. IF-2 subfamily.

Functionally, function in general translation initiation by promoting the binding of the formylmethionine-tRNA to ribosomes. Seems to function along with eIF-2. This is Probable translation initiation factor IF-2 from Methanocorpusculum labreanum (strain ATCC 43576 / DSM 4855 / Z).